Here is a 391-residue protein sequence, read N- to C-terminus: Multidrug resistance protein MdtL (391 aa).

The next 12 membrane-spanning stretches (helical) occupy residues 4–24, 42–62, 69–89, 93–113, 131–151, 158–178, 203–222, 245–265, 269–289, 293–313, 331–351, and 356–376; these read FLIC…MYLV, IAFS…GKVA, PVAI…SLAE, LFLA…VVAF, LLNG…HLIM, SLFW…LFIL, FFLS…LTFV, ALTA…LGIF, TLMI…AVSP, VSLF…GVAM, LGIA…VVGI, and MLIG…MFVA.

Belongs to the major facilitator superfamily. DHA1 family. MdtL (TC 2.A.1.2.22) subfamily.

The protein localises to the cell inner membrane. Its function is as follows. Confers resistance to chloramphenicol. This is Multidrug resistance protein MdtL from Escherichia coli O139:H28 (strain E24377A / ETEC).